The following is a 245-amino-acid chain: Carbohydrate deacetylase (245 aa).

Mg(2+) is bound by residues H59 and H125.

The protein belongs to the YdjC deacetylase family. As to quaternary structure, homodimer. It depends on Mg(2+) as a cofactor.

Probably catalyzes the deacetylation of acetylated carbohydrates an important step in the degradation of oligosaccharides. The polypeptide is Carbohydrate deacetylase (Listeria monocytogenes serotype 4b (strain CLIP80459)).